The primary structure comprises 193 residues: uncharacterized protein (193 aa).

This is an uncharacterized protein from Haemophilus influenzae (strain ATCC 51907 / DSM 11121 / KW20 / Rd).